The chain runs to 74 residues: DUP240 protein DFP2 (74 aa).

It belongs to the DUP/COS family.

It localises to the cytoplasm. The protein localises to the membrane. The protein is DUP240 protein DFP2 of Saccharomyces cerevisiae (strain ATCC 204508 / S288c) (Baker's yeast).